The following is a 227-amino-acid chain: ATP-dependent dethiobiotin synthetase BioD (227 aa).

Residue 13 to 18 (NIGKTV) coordinates ATP. Thr-17 contributes to the Mg(2+) binding site. Lys-38 is an active-site residue. Residues Asp-55 and 116–119 (EGIG) contribute to the ATP site. Residues Asp-55 and Glu-116 each contribute to the Mg(2+) site.

It belongs to the dethiobiotin synthetase family. Homodimer. Mg(2+) is required as a cofactor.

The protein resides in the cytoplasm. It catalyses the reaction (7R,8S)-7,8-diammoniononanoate + CO2 + ATP = (4R,5S)-dethiobiotin + ADP + phosphate + 3 H(+). Its pathway is cofactor biosynthesis; biotin biosynthesis; biotin from 7,8-diaminononanoate: step 1/2. Functionally, catalyzes a mechanistically unusual reaction, the ATP-dependent insertion of CO2 between the N7 and N8 nitrogen atoms of 7,8-diaminopelargonic acid (DAPA, also called 7,8-diammoniononanoate) to form a ureido ring. The sequence is that of ATP-dependent dethiobiotin synthetase BioD from Buchnera aphidicola subsp. Baizongia pistaciae (strain Bp).